We begin with the raw amino-acid sequence, 424 residues long: Tubulin-specific chaperone cofactor E-like protein (424 aa).

Phosphoserine is present on residues Ser18 and Ser41. LRR repeat units lie at residues 73-98, 99-123, 124-147, 150-172, 173-197, 199-224, and 226-250; these read CAHVSELDLSDNKLQDWHEVSKIVSN, VPQLEFLNLSSNPLSLSVLERTCAG, SFSGVRKLVLNNSKASWETVHTIL, LPDLEELFLCLNDYETVSCPSVC, CHSLKLLHITDNNLQEWTEIRKLGV, FPSLDTLVLANNHVNAIEEPADSLAR, and FPNLRSISLHKSGLQSWEDIDKLNS. Positions 262–303 constitute an LRRCT domain; that stretch reads IPLLQPYTTEERRKLVVARLPSVSKLNGSVVTDGEREDSERF. The region spanning 334–424 is the Ubiquitin-like domain; sequence AEVDLRPQSS…DKIFVESKTK (91 aa). Positions 350–375 form a coiled coil; sequence FNDQVEEVSIRLDQTVAELKRQLKTL.

The protein localises to the cytoplasm. The protein resides in the cytoskeleton. Its function is as follows. Acts as a regulator of tubulin stability. The chain is Tubulin-specific chaperone cofactor E-like protein (Tbcel) from Rattus norvegicus (Rat).